Reading from the N-terminus, the 467-residue chain is tRNA modification GTPase MnmE (467 aa).

(6S)-5-formyl-5,6,7,8-tetrahydrofolate-binding residues include Arg-27, Glu-89, and Arg-128. Positions 225–387 (GISMVIAGRP…LKQAIFTVVT (163 aa)) constitute a TrmE-type G domain. K(+) is bound at residue Asn-235. Residues 235–240 (NVGKSS), 254–260 (TSIAGTT), 279–282 (DTAG), and 368–370 (SAR) each bind GTP. Ser-239 lines the Mg(2+) pocket. Thr-254, Ile-256, and Thr-259 together coordinate K(+). Position 260 (Thr-260) interacts with Mg(2+). Lys-467 serves as a coordination point for (6S)-5-formyl-5,6,7,8-tetrahydrofolate.

Belongs to the TRAFAC class TrmE-Era-EngA-EngB-Septin-like GTPase superfamily. TrmE GTPase family. In terms of assembly, homodimer. Heterotetramer of two MnmE and two MnmG subunits. It depends on K(+) as a cofactor.

Its subcellular location is the cytoplasm. Its function is as follows. Exhibits a very high intrinsic GTPase hydrolysis rate. Involved in the addition of a carboxymethylaminomethyl (cmnm) group at the wobble position (U34) of certain tRNAs, forming tRNA-cmnm(5)s(2)U34. The polypeptide is tRNA modification GTPase MnmE (Desulfotalea psychrophila (strain LSv54 / DSM 12343)).